The primary structure comprises 1416 residues: DNA-directed RNA polymerase subunit beta' (1416 aa).

The Zn(2+) site is built by Cys71, Cys73, Cys86, and Cys89. 3 residues coordinate Mg(2+): Asp461, Asp463, and Asp465. Zn(2+) contacts are provided by Cys815, Cys892, Cys899, and Cys902.

It belongs to the RNA polymerase beta' chain family. In terms of assembly, the RNAP catalytic core consists of 2 alpha, 1 beta, 1 beta' and 1 omega subunit. When a sigma factor is associated with the core the holoenzyme is formed, which can initiate transcription. Mg(2+) serves as cofactor. Requires Zn(2+) as cofactor.

It catalyses the reaction RNA(n) + a ribonucleoside 5'-triphosphate = RNA(n+1) + diphosphate. Its function is as follows. DNA-dependent RNA polymerase catalyzes the transcription of DNA into RNA using the four ribonucleoside triphosphates as substrates. The sequence is that of DNA-directed RNA polymerase subunit beta' from Blochmanniella pennsylvanica (strain BPEN).